The following is a 480-amino-acid chain: Glutamyl-tRNA(Gln) amidotransferase subunit A (480 aa).

Residues K74 and S149 each act as charge relay system in the active site. S173 functions as the Acyl-ester intermediate in the catalytic mechanism.

Belongs to the amidase family. GatA subfamily. Heterotrimer of A, B and C subunits.

The enzyme catalyses L-glutamyl-tRNA(Gln) + L-glutamine + ATP + H2O = L-glutaminyl-tRNA(Gln) + L-glutamate + ADP + phosphate + H(+). Its function is as follows. Allows the formation of correctly charged Gln-tRNA(Gln) through the transamidation of misacylated Glu-tRNA(Gln) in organisms which lack glutaminyl-tRNA synthetase. The reaction takes place in the presence of glutamine and ATP through an activated gamma-phospho-Glu-tRNA(Gln). This chain is Glutamyl-tRNA(Gln) amidotransferase subunit A, found in Ruthia magnifica subsp. Calyptogena magnifica.